The primary structure comprises 968 residues: Glycine dehydrogenase (decarboxylating) (968 aa).

Lysine 712 carries the N6-(pyridoxal phosphate)lysine modification.

It belongs to the GcvP family. The glycine cleavage system is composed of four proteins: P, T, L and H. It depends on pyridoxal 5'-phosphate as a cofactor.

It catalyses the reaction N(6)-[(R)-lipoyl]-L-lysyl-[glycine-cleavage complex H protein] + glycine + H(+) = N(6)-[(R)-S(8)-aminomethyldihydrolipoyl]-L-lysyl-[glycine-cleavage complex H protein] + CO2. The glycine cleavage system catalyzes the degradation of glycine. The P protein binds the alpha-amino group of glycine through its pyridoxal phosphate cofactor; CO(2) is released and the remaining methylamine moiety is then transferred to the lipoamide cofactor of the H protein. This Prochlorococcus marinus (strain NATL2A) protein is Glycine dehydrogenase (decarboxylating).